The primary structure comprises 189 residues: Recombination protein RecR (189 aa).

A C4-type zinc finger spans residues Cys48 to Cys63. The Toprim domain maps to Gly71–Pro165.

Belongs to the RecR family.

In terms of biological role, may play a role in DNA repair. It seems to be involved in an RecBC-independent recombinational process of DNA repair. It may act with RecF and RecO. This Synechococcus sp. (strain CC9311) protein is Recombination protein RecR.